Reading from the N-terminus, the 260-residue chain is Putative cysteine-rich repeat secretory protein 23 (260 aa).

The signal sequence occupies residues 1 to 31; sequence MSSSFVYKSLFLVPILAVVAMQLSFVQSVLS. 2 consecutive Gnk2-homologous domains span residues 38-136 and 142-254; these read YLHH…NISY and LPEQ…LYLF.

This sequence belongs to the cysteine-rich repeat secretory protein family.

It is found in the secreted. In Arabidopsis thaliana (Mouse-ear cress), this protein is Putative cysteine-rich repeat secretory protein 23 (CRRSP23).